Reading from the N-terminus, the 187-residue chain is Aspartic protease inhibitor 9 (187 aa).

Residue Asn-19 is glycosylated (N-linked (GlcNAc...) asparagine). Cystine bridges form between Cys-48/Cys-93 and Cys-142/Cys-158.

Belongs to the protease inhibitor I3 (leguminous Kunitz-type inhibitor) family. Post-translationally, glycosylated. As to expression, tubers.

Its subcellular location is the vacuole. Functionally, inhibitor of cathepsin D (aspartic protease) and trypsin (serine protease). May protect the plant by inhibiting proteases of invading organisms. This Solanum tuberosum (Potato) protein is Aspartic protease inhibitor 9.